Reading from the N-terminus, the 161-residue chain is Phosphopantetheine adenylyltransferase (161 aa).

Substrate is bound at residue T10. ATP contacts are provided by residues 10 to 11 (TF) and H18. Substrate is bound by residues K42, L75, and R89. Residues 90–92 (GLR), E100, and 125–131 (YSFLSSS) contribute to the ATP site.

Belongs to the bacterial CoaD family. In terms of assembly, homohexamer. It depends on Mg(2+) as a cofactor.

Its subcellular location is the cytoplasm. It carries out the reaction (R)-4'-phosphopantetheine + ATP + H(+) = 3'-dephospho-CoA + diphosphate. The protein operates within cofactor biosynthesis; coenzyme A biosynthesis; CoA from (R)-pantothenate: step 4/5. Functionally, reversibly transfers an adenylyl group from ATP to 4'-phosphopantetheine, yielding dephospho-CoA (dPCoA) and pyrophosphate. The polypeptide is Phosphopantetheine adenylyltransferase (Thermodesulfovibrio yellowstonii (strain ATCC 51303 / DSM 11347 / YP87)).